A 147-amino-acid chain; its full sequence is Cytochrome c-type biogenesis protein CcmE 1 (147 aa).

Over 1 to 9 the chain is Cytoplasmic; sequence MKSLKKQRR. A helical; Signal-anchor for type II membrane protein membrane pass occupies residues 10–30; it reads IQVIILATVALVLATGLIGYA. Topologically, residues 31 to 147 are periplasmic; that stretch reads MRDGINFFRA…EQGVYQAPES (117 aa). Heme is bound by residues histidine 123 and tyrosine 127.

It belongs to the CcmE/CycJ family.

It is found in the cell inner membrane. Heme chaperone required for the biogenesis of c-type cytochromes. Transiently binds heme delivered by CcmC and transfers the heme to apo-cytochromes in a process facilitated by CcmF and CcmH. The polypeptide is Cytochrome c-type biogenesis protein CcmE 1 (Ruegeria pomeroyi (strain ATCC 700808 / DSM 15171 / DSS-3) (Silicibacter pomeroyi)).